A 75-amino-acid polypeptide reads, in one-letter code: Protein BRICK1 (75 aa).

Residue A2 is modified to N-acetylalanine. The stretch at 41-72 (MSCRSRLATLNEKLTALERRIEYIEARVTKGE) forms a coiled coil.

It belongs to the BRK1 family. In terms of assembly, homotrimer when in free form. Directly interacts with WASF2. Component of the WAVE1 complex composed of ABI2, CYFIP1 or CYFIP2, BRK1, NCKAP1 and WASF1/WAVE1. Within the complex, a heterodimer containing NCKAP1 and CYFIP1 interacts with a heterotrimer formed by WAVE1, ABI2 and BRK1.

Its subcellular location is the cytoplasm. The protein localises to the cytoskeleton. Its function is as follows. Involved in regulation of actin and microtubule organization. Part of a WAVE complex that activates the Arp2/3 complex. As component of the WAVE1 complex, required for BDNF-NTRK2 endocytic trafficking and signaling from early endosomes. The protein is Protein BRICK1 (BRK1) of Homo sapiens (Human).